We begin with the raw amino-acid sequence, 188 residues long: uncharacterized protein (188 aa).

The protein resides in the plastid. It localises to the cyanelle. This is an uncharacterized protein from Cyanophora paradoxa.